Reading from the N-terminus, the 379-residue chain is NAD-dependent protein deacetylase sirtuin-2 (379 aa).

Residues 1-10 (MSEEVSKRVE) are compositionally biased toward basic and acidic residues. The interval 1 to 32 (MSEEVSKRVEEEADTPGLEGQSDDSSDEGDAS) is disordered. The segment covering 21 to 32 (QSDDSSDEGDAS) has biased composition (acidic residues). The Deacetylase sirtuin-type domain maps to 55–335 (KVLDELTLDS…MTLAELLGWK (281 aa)). Residues 83 to 87 (AGIST), 93 to 95 (DFR), and 165 to 168 (QNID) contribute to the NAD(+) site. Histidine 185 (proton acceptor) is an active-site residue. Residues cysteine 193, cysteine 198, cysteine 219, and cysteine 222 each contribute to the Zn(2+) site. NAD(+)-binding positions include 260-261 (TS), 284-286 (NME), and cysteine 321. Basic and acidic residues predominate over residues 349–361 (IDSKDAKKTDKEA). A disordered region spans residues 349-379 (IDSKDAKKTDKEASQSSKSAVAEAEKTDKTE).

The protein belongs to the sirtuin family. Class I subfamily. It depends on Zn(2+) as a cofactor.

It is found in the cytoplasm. The protein resides in the nucleus. The catalysed reaction is N(6)-acetyl-L-lysyl-[protein] + NAD(+) + H2O = 2''-O-acetyl-ADP-D-ribose + nicotinamide + L-lysyl-[protein]. It catalyses the reaction N(6)-tetradecanoyl-L-lysyl-[protein] + NAD(+) + H2O = 2''-O-tetradecanoyl-ADP-D-ribose + nicotinamide + L-lysyl-[protein]. It carries out the reaction N(6)-hexadecanoyl-L-lysyl-[protein] + NAD(+) + H2O = 2''-O-hexadecanoyl-ADP-D-ribose + nicotinamide + L-lysyl-[protein]. Its function is as follows. NAD-dependent protein deacetylase, which deacetylates internal lysines on histone and alpha-tubulin as well as many other proteins such as key transcription factors. Participates in the modulation of multiple and diverse biological processes such as cell cycle control, genomic integrity, microtubule dynamics, cell differentiation, metabolic networks, and autophagy. Plays a major role in the control of cell cycle progression and genomic stability. Deacetylates histone H4 at 'Lys-16' (H4K16ac) at the VEGFA promoter. Thereby contributes to regulate expression of vegfa, a key regulator of angiogenesis. In addition to protein deacetylase activity, also has activity toward long-chain fatty acyl groups and mediates protein-lysine demyristoylation and depalmitoylation of target proteins. This Danio rerio (Zebrafish) protein is NAD-dependent protein deacetylase sirtuin-2 (sirt2).